Consider the following 258-residue polypeptide: Alpha-fibrinogenase-like (258 aa).

A signal peptide spans M1–A18. Positions Q19–L24 are excised as a propeptide. Residues V25–A249 form the Peptidase S1 domain. Cystine bridges form between C31–C163, C50–C66, C98–C256, C142–C210, C174–C189, and C200–C225. The N-linked (GlcNAc...) asparagine glycan is linked to N44. Residues H65 and D110 each act as charge relay system in the active site. S204 functions as the Charge relay system in the catalytic mechanism.

The protein belongs to the peptidase S1 family. Snake venom subfamily. As to quaternary structure, monomer. In terms of tissue distribution, expressed by the venom gland.

It localises to the secreted. Degrades alpha chain of fibrinogen (FGA), and has strong caseinolytic activity. Cleaves oxidized insulin B-chain at '40-Tyr-|-Leu-41', '48-Phe-|-Phe-49' and '49-Phe-|-Tyr-50', and glucagon at the bonds '62-Tyr-|-Ser-63', 66-Leu-|-Asp-67' and '78-Leu-|-Met-79' bonds. The polypeptide is Alpha-fibrinogenase-like (Daboia siamensis (Eastern Russel's viper)).